Reading from the N-terminus, the 656-residue chain is Protein sly1 homolog (656 aa).

Repeat copies occupy residues 85-121, 203-245, 419-456, and 460-496. Residues 85–496 form a 4 X approximate repeats region; that stretch reads DENLDRIQQD…QATQYEGGGT (412 aa).

This sequence belongs to the STXBP/unc-18/SEC1 family.

The protein localises to the cytoplasm. The protein resides in the membrane. Non-vital for development. In Drosophila virilis (Fruit fly), this protein is Protein sly1 homolog (Slh).